We begin with the raw amino-acid sequence, 518 residues long: Ent-cassadiene hydroxylase (518 aa).

The helical transmembrane segment at 6–26 threads the bilayer; it reads LILALGLSVLFVLLSKLVSSA. C451 is a binding site for heme.

Belongs to the cytochrome P450 family. Heme serves as cofactor.

The protein localises to the membrane. The enzyme catalyses ent-cassa-12,15-diene + 3 reduced [NADPH--hemoprotein reductase] + 3 O2 = ent-3beta-hydroxycassa-12,15-dien-2-one + 3 oxidized [NADPH--hemoprotein reductase] + 4 H2O + 3 H(+). In terms of biological role, enzyme of the diterpenoid metabolism involved in the biosynthesis of antibacterial oryzalides such as phytocassane. Catalyzes the hydroxylation of ent-cassa-12,15-diene to form ent-3beta-hydroxycassa-12,15-dien-2-one. The chain is Ent-cassadiene hydroxylase (CYP71Z7) from Oryza sativa subsp. japonica (Rice).